A 251-amino-acid chain; its full sequence is Coproheme decarboxylase (251 aa).

Fe-coproporphyrin III-binding positions include Arg-133, 147 to 151 (YPMSK), His-174, Gln-187, and Ser-225. The active site involves Tyr-147.

The protein belongs to the ChdC family. Type 1 subfamily. Fe-coproporphyrin III is required as a cofactor.

The enzyme catalyses Fe-coproporphyrin III + 2 H2O2 + 2 H(+) = heme b + 2 CO2 + 4 H2O. It carries out the reaction Fe-coproporphyrin III + H2O2 + H(+) = harderoheme III + CO2 + 2 H2O. It catalyses the reaction harderoheme III + H2O2 + H(+) = heme b + CO2 + 2 H2O. It functions in the pathway porphyrin-containing compound metabolism; protoheme biosynthesis. In terms of biological role, involved in coproporphyrin-dependent heme b biosynthesis. Catalyzes the decarboxylation of Fe-coproporphyrin III (coproheme) to heme b (protoheme IX), the last step of the pathway. The reaction occurs in a stepwise manner with a three-propionate intermediate. The chain is Coproheme decarboxylase from Listeria monocytogenes serotype 4b (strain CLIP80459).